A 332-amino-acid chain; its full sequence is Tetraacyldisaccharide 4'-kinase (332 aa).

An ATP-binding site is contributed by 53–60 (SVGGNGKT).

Belongs to the LpxK family.

It catalyses the reaction a lipid A disaccharide + ATP = a lipid IVA + ADP + H(+). The protein operates within glycolipid biosynthesis; lipid IV(A) biosynthesis; lipid IV(A) from (3R)-3-hydroxytetradecanoyl-[acyl-carrier-protein] and UDP-N-acetyl-alpha-D-glucosamine: step 6/6. In terms of biological role, transfers the gamma-phosphate of ATP to the 4'-position of a tetraacyldisaccharide 1-phosphate intermediate (termed DS-1-P) to form tetraacyldisaccharide 1,4'-bis-phosphate (lipid IVA). The chain is Tetraacyldisaccharide 4'-kinase from Haemophilus influenzae (strain 86-028NP).